The chain runs to 426 residues: MATMANHDRETTQPTCQNCATSTTPLWRRDEMGQVLCNACGLFLKLHGRPRPISLKTDVIKSRNRVKTMRPDLAKQKKQQQQQQQQQNLAATADMNGGVGMMDPNNPAAAARRASQKSINGHPVDDNSPVSRTGTPNVYNPHIPIDHSLEYQFQAQQIPGFGVPTASPGRAPSPMNGEHMPQTHEQLLAANASLKTRVSELEVIQELYRGRLHQLETEENIRQASEPGKLEAQLRAQIDAMGEAHQQLQKELEESHRRENMLKRRLDELEVELKDVKDALESQDNGRHKKIRLDENVKTEPYAEVVEPQQPEQQQPAPAEQPIPTPMAIDEATPAPAPAPEAAPEQAPAPAPEPVQEQAQEPEPAPVSEPTEASAPAPAPEADSVVPEPTPAAPESAPTEEPAAPETEASEPPTTAPVEEAPKAES.

A GATA-type zinc finger spans residues 16–40 (CQNCATSTTPLWRRDEMGQVLCNAC). Disordered regions lie at residues 70 to 143 (RPDL…NPHI) and 159 to 178 (PGFGVPTASPGRAPSPMNGE). The span at 104-113 (PNNPAAAARR) shows a compositional bias: low complexity. Positions 128 to 138 (SPVSRTGTPNV) are enriched in polar residues. Residues 182–292 (QTHEQLLAAN…QDNGRHKKIR (111 aa)) adopt a coiled-coil conformation. Residues 306 to 318 (VEPQQPEQQQPAP) are compositionally biased toward low complexity. The interval 306–426 (VEPQQPEQQQ…PVEEAPKAES (121 aa)) is disordered. Positions 335 to 353 (APAPAPEAAPEQAPAPAPE) are enriched in pro residues. Low complexity predominate over residues 354–419 (PVQEQAQEPE…SEPPTTAPVE (66 aa)).

Homotetramer.

It is found in the nucleus. Transcriptional regulator that functions in sexual development; disruption of asd-4 gene results in agenesis of ascus and ascospore with macroscopically normal fruiting body formation. The GATA-type zinc finger domain binds to DNA sequences from its own promoter region. The sequence is that of GATA type zinc finger protein asd-4 (asd-4) from Neurospora crassa (strain ATCC 24698 / 74-OR23-1A / CBS 708.71 / DSM 1257 / FGSC 987).